The sequence spans 103 residues: Large ribosomal subunit protein bL21 (103 aa).

Belongs to the bacterial ribosomal protein bL21 family. Part of the 50S ribosomal subunit. Contacts protein L20.

In terms of biological role, this protein binds to 23S rRNA in the presence of protein L20. This chain is Large ribosomal subunit protein bL21, found in Albidiferax ferrireducens (strain ATCC BAA-621 / DSM 15236 / T118) (Rhodoferax ferrireducens).